Consider the following 177-residue polypeptide: Adenine phosphoribosyltransferase (177 aa).

Belongs to the purine/pyrimidine phosphoribosyltransferase family. As to quaternary structure, homodimer.

It is found in the cytoplasm. The enzyme catalyses AMP + diphosphate = 5-phospho-alpha-D-ribose 1-diphosphate + adenine. The protein operates within purine metabolism; AMP biosynthesis via salvage pathway; AMP from adenine: step 1/1. Functionally, catalyzes a salvage reaction resulting in the formation of AMP, that is energically less costly than de novo synthesis. This is Adenine phosphoribosyltransferase from Rhodococcus opacus (strain B4).